The chain runs to 518 residues: Probable Xaa-Pro aminopeptidase HCDG_07916 (518 aa).

D289, D300, E437, and E475 together coordinate Mn(2+).

It belongs to the peptidase M24B family. Mn(2+) is required as a cofactor.

It carries out the reaction Release of any N-terminal amino acid, including proline, that is linked to proline, even from a dipeptide or tripeptide.. In terms of biological role, catalyzes the removal of a penultimate prolyl residue from the N-termini of peptides. The protein is Probable Xaa-Pro aminopeptidase HCDG_07916 of Ajellomyces capsulatus (strain H143) (Darling's disease fungus).